Here is a 629-residue protein sequence, read N- to C-terminus: MGYNAGSYDVIVIGAGHAGCEAGLAAARMGSKTLMLTINLDMVAFMPCNPSVGGPAKGIVVREIDALGGEMGRNIDKTHIQMRMLNTGKGPAVRALRAQADKFSYQHELKKTIEETPNLTLFQGMVERLIVEDGECKGVITQAGAEYTAKTVVITTGTFLRGEIIMGDLKYSSGPNNQQPSITLSEHLEELGFDLVRFKTGTPPRVNSNTIDYSKTEIQPGDDKPRAFSFETTKFIMDQIPCWLTYTSTETHRLIDENLHRSAMYSGMIKGTGPRYCPSIEDKVVRFNDKPRHQIFLEPEGRNTQEVYVQGLSTSLPEDVQRDMLRTIPGLENVEMMRTGYAIEYDAIVPTQLWPTLETKKIKNLYTAGQINGTSGYEEAAGQGLMAGINAACRSLGKKEVILGREDAYIGVLIDDLVTKGTNEPYRLLTSRAEYRLLLRHDNADLRLTEIGHEIGLIKEERYERFTNKKLQIEQEKERLSSIIIKPRPEVQELIRNIGGSELKDGIRASDLLRRPEMTYEHIHLLVPSEVELSDEVTEQVEIQIKYEGYIEKSLQQVERMKKMESKKIPVDIDYDAISSLASEARQKLKDVRPLSVGQASRISGVNPADISILLVYIEQGKIARVSNQ.

Residues 14–19 (GAGHAG), Val126, and Ser181 each bind FAD. NAD(+) is bound at residue 273-287 (GPRYCPSIEDKVVRF). Gln370 provides a ligand contact to FAD.

It belongs to the MnmG family. Homodimer. Heterotetramer of two MnmE and two MnmG subunits. Requires FAD as cofactor.

It is found in the cytoplasm. Functionally, NAD-binding protein involved in the addition of a carboxymethylaminomethyl (cmnm) group at the wobble position (U34) of certain tRNAs, forming tRNA-cmnm(5)s(2)U34. The protein is tRNA uridine 5-carboxymethylaminomethyl modification enzyme MnmG of Bacillus cereus (strain ATCC 10987 / NRS 248).